Here is a 140-residue protein sequence, read N- to C-terminus: Ribosome maturation factor RimP (140 aa).

Belongs to the RimP family.

The protein localises to the cytoplasm. Functionally, required for maturation of 30S ribosomal subunits. This is Ribosome maturation factor RimP from Campylobacter jejuni subsp. doylei (strain ATCC BAA-1458 / RM4099 / 269.97).